Reading from the N-terminus, the 309-residue chain is L-lactate dehydrogenase (309 aa).

NAD(+)-binding positions include Val12, Asp33, Arg38, Tyr63, and 77 to 78 (GA). Residues Gln80, Arg86, and 118–121 (NPVD) each bind substrate. Residues 116-118 (ATN) and Ser141 each bind NAD(+). 146–149 (DSAR) is a binding site for substrate. Beta-D-fructose 1,6-bisphosphate is bound by residues Arg151 and His166. The active-site Proton acceptor is His173. Residue Tyr219 is modified to Phosphotyrosine. Residue Thr228 coordinates substrate.

This sequence belongs to the LDH/MDH superfamily. LDH family. In terms of assembly, homotetramer.

Its subcellular location is the cytoplasm. It carries out the reaction (S)-lactate + NAD(+) = pyruvate + NADH + H(+). It participates in fermentation; pyruvate fermentation to lactate; (S)-lactate from pyruvate: step 1/1. Its activity is regulated as follows. Allosterically activated by fructose 1,6-bisphosphate (FBP). Its function is as follows. Catalyzes the conversion of lactate to pyruvate. This chain is L-lactate dehydrogenase, found in Nitratidesulfovibrio vulgaris (strain ATCC 29579 / DSM 644 / CCUG 34227 / NCIMB 8303 / VKM B-1760 / Hildenborough) (Desulfovibrio vulgaris).